A 372-amino-acid polypeptide reads, in one-letter code: Chloromuconate cycloisomerase (372 aa).

Lysine 158 acts as the Proton acceptor in catalysis. Mn(2+) is bound by residues aspartate 187, glutamate 213, and aspartate 238. The active-site Proton donor is the glutamate 316.

It belongs to the mandelate racemase/muconate lactonizing enzyme family. Requires Mn(2+) as cofactor.

It carries out the reaction 2-[(2R)-2-chloro-2,5-dihydro-5-oxofuryl]acetate = 3-chloro-cis,cis-muconate + H(+). It functions in the pathway aromatic compound metabolism; 3-chlorocatechol degradation. This is Chloromuconate cycloisomerase (tfdDII) from Cupriavidus pinatubonensis (strain JMP 134 / LMG 1197) (Cupriavidus necator (strain JMP 134)).